A 274-amino-acid polypeptide reads, in one-letter code: 2,3,4,5-tetrahydropyridine-2,6-dicarboxylate N-succinyltransferase (274 aa).

Residues R104 and D141 each coordinate substrate.

Belongs to the transferase hexapeptide repeat family. Homotrimer.

It is found in the cytoplasm. The catalysed reaction is (S)-2,3,4,5-tetrahydrodipicolinate + succinyl-CoA + H2O = (S)-2-succinylamino-6-oxoheptanedioate + CoA. It functions in the pathway amino-acid biosynthesis; L-lysine biosynthesis via DAP pathway; LL-2,6-diaminopimelate from (S)-tetrahydrodipicolinate (succinylase route): step 1/3. The chain is 2,3,4,5-tetrahydropyridine-2,6-dicarboxylate N-succinyltransferase from Sodalis glossinidius (strain morsitans).